The primary structure comprises 742 residues: Phosphoribosylformylglycinamidine synthase subunit PurL (742 aa).

His54 is an active-site residue. Residues Tyr57 and Lys96 each contribute to the ATP site. A Mg(2+)-binding site is contributed by Glu98. Substrate is bound by residues 99 to 102 (SHNH) and Arg121. His100 (proton acceptor) is an active-site residue. Asp122 is a binding site for Mg(2+). Gln245 lines the substrate pocket. Asp273 contacts Mg(2+). Position 317–319 (317–319 (ESQ)) interacts with substrate. Residues Asp500 and Gly537 each coordinate ATP. A Mg(2+)-binding site is contributed by Asn538. Residue Ser540 coordinates substrate.

The protein belongs to the FGAMS family. In terms of assembly, monomer. Part of the FGAM synthase complex composed of 1 PurL, 1 PurQ and 2 PurS subunits.

The protein resides in the cytoplasm. It catalyses the reaction N(2)-formyl-N(1)-(5-phospho-beta-D-ribosyl)glycinamide + L-glutamine + ATP + H2O = 2-formamido-N(1)-(5-O-phospho-beta-D-ribosyl)acetamidine + L-glutamate + ADP + phosphate + H(+). The protein operates within purine metabolism; IMP biosynthesis via de novo pathway; 5-amino-1-(5-phospho-D-ribosyl)imidazole from N(2)-formyl-N(1)-(5-phospho-D-ribosyl)glycinamide: step 1/2. Functionally, part of the phosphoribosylformylglycinamidine synthase complex involved in the purines biosynthetic pathway. Catalyzes the ATP-dependent conversion of formylglycinamide ribonucleotide (FGAR) and glutamine to yield formylglycinamidine ribonucleotide (FGAM) and glutamate. The FGAM synthase complex is composed of three subunits. PurQ produces an ammonia molecule by converting glutamine to glutamate. PurL transfers the ammonia molecule to FGAR to form FGAM in an ATP-dependent manner. PurS interacts with PurQ and PurL and is thought to assist in the transfer of the ammonia molecule from PurQ to PurL. The chain is Phosphoribosylformylglycinamidine synthase subunit PurL from Geobacillus sp. (strain WCH70).